The chain runs to 116 residues: uncharacterized protein (116 aa).

Residues 76–116 form a disordered region; that stretch reads VPPPRYSYIRSESSRNNLRNSARNQPQNLVSEQDSDSNREN. Residues 85 to 99 show a composition bias toward low complexity; sequence RSESSRNNLRNSARN.

This is an uncharacterized protein from Glycine max (Soybean).